The following is a 166-amino-acid chain: Emerin homolog 1 (166 aa).

The region spanning 1-44 is the LEM domain; sequence MDVSQLTDAELRDSLKSHGVSVGPIVATTRKLYEKKLIKLSDGS. The Nuclear segment spans residues 1-127; sequence MDVSQLTDAE…QAQSNKGGFL (127 aa). A disordered region spans residues 62-99; sequence IISSSPKKSPPQRVFQNVSAATAAATTSPESDSDDCEE. Residues 128–148 form a helical membrane-spanning segment; the sequence is GSTITFTILFVFIAVFAYFLI. At 149–166 the chain is on the perinuclear space side; sequence ENAEQLKLVAETNPEDTI.

As to quaternary structure, interacts with lmn-1 and baf-1. Ubiquitous. Expressed in all cells, except in cells undergoing spermatogenesis. High expression in hypodermis, neurons, pharyngeal muscle, body wall muscle and gonadal sheath.

It localises to the nucleus inner membrane. It is found in the nucleus envelope. In terms of biological role, nuclear lamina-associated inner nuclear membrane protein that is involved in cell division, nuclear structure organization, maintenance of nuclear envelope integrity and nuclear envelope reformation after mitosis. Involved in chromosome segregation and cell division, probably via its interaction with the nuclear intermediate filament protein lmn-1, the main component of nuclear lamina. Required to organize the distribution of lmn-1, nuclear pore complexes (NPCs) and chromatin in mitotically active cells. Together with lem-2, plays a role in baf-1 enrichment at the nuclear envelope in anaphase. Together with lem-2, involved in muscle cell attachment to hypodermal cells, as well as muscle cell location and sarcomere organization. May play a role in radiation-induced DNA damage repair response. May repress binding of transcription factor pha-4 with target sequences in pharyngeal cells. The protein is Emerin homolog 1 (emr-1) of Caenorhabditis elegans.